A 358-amino-acid chain; its full sequence is MQQIQVQLGDRSYPIYIGQDLMNDSELFARYLTNKKALIVSNDTIAPLYLQQIQQAMSACARIETVILPDGEKFKDLQHLDYIFTELLEHNFARDSVLVALGGGVVGDMTGFAAACYQRGIEFIQVPTTLLSQVDSSVGGKTAVNHPLGKNMIGAFYQPKSVIIDTFCLQTLPANEFAAGMAEVIKYGIIWDADFFQWLEANVDALKSLQTDALNYAIAKCCQIKADVVAQDETEQGVRALLNLGHTFGHAIEAEMGYGVWLHGEAVSAGTVLAAQTAYKLNLLDEQSVERICRLMQAFDLPITAPESMGFEQFIKHMRRDKKVLGGKIRLVLPTEIGKADVFSDVSEDLLKQVISCV.

Residues 70–75 (DGEKFK), 104–108 (GVVGD), 128–129 (TT), lysine 141, lysine 150, and 168–171 (CLQT) each bind NAD(+). Zn(2+) contacts are provided by glutamate 183, histidine 246, and histidine 263.

It belongs to the sugar phosphate cyclases superfamily. Dehydroquinate synthase family. It depends on Co(2+) as a cofactor. Zn(2+) serves as cofactor. NAD(+) is required as a cofactor.

It is found in the cytoplasm. The enzyme catalyses 7-phospho-2-dehydro-3-deoxy-D-arabino-heptonate = 3-dehydroquinate + phosphate. It participates in metabolic intermediate biosynthesis; chorismate biosynthesis; chorismate from D-erythrose 4-phosphate and phosphoenolpyruvate: step 2/7. Functionally, catalyzes the conversion of 3-deoxy-D-arabino-heptulosonate 7-phosphate (DAHP) to dehydroquinate (DHQ). The polypeptide is 3-dehydroquinate synthase (Shewanella frigidimarina (strain NCIMB 400)).